We begin with the raw amino-acid sequence, 893 residues long: Dystroglycan 1 (893 aa).

The N-terminal stretch at 1–27 (MSVDNWLLHPLWGQTFLLLLSVAVAQA) is a signal peptide. Residues 28-406 (HWPSEPSEAV…GQIRPTLTIP (379 aa)) are required for laminin recognition. The tract at residues 47–69 (SMHSVLSDFQEAVPTVVGIPDGT) is O-glycosylated at one site. Asn139 is a glycosylation site (N-linked (GlcNAc...) asparagine). Cys180 and Cys262 are disulfide-bonded. The mucin-like domain stretch occupies residues 314–483 (ATPTPVTAIG…PPTRIRTTTS (170 aa)). O-linked (Man6P...) threonine glycans are attached at residues Thr315, Thr317, and Thr377. The interval 379-498 (TLGPIQPTRV…GEPNQRPELK (120 aa)) is disordered. Residues 409-445 (VEPTAVITPPTTTTKKPRVSTPKPATPSTDSSTTTTR) are compositionally biased toward low complexity. The interval 461–483 (TTKAPITRLETASPPTRIRTTTS) is O-glycosylated at seven sites with GalNAc. The Peptidase S72 domain occupies 601–710 (KAPARFKARL…LSIAVTGSGS (110 aa)). N-linked (GlcNAc...) asparagine glycans are attached at residues Asn639, Asn647, and Asn659. Topologically, residues 652–751 (SIVVEWTNNT…SSEDDVYLHT (100 aa)) are extracellular. A disulfide bond links Cys667 and Cys711. Residues 722–744 (PSPGSSAAPATEVPDRDPEKSSE) form a disordered region. Residues 734–744 (VPDRDPEKSSE) show a composition bias toward basic and acidic residues. A helical transmembrane segment spans residues 752 to 772 (VIPAVVVAAILLIAGIIAMIC). Residues 773–893 (YRKKRKGKLT…YRSPPPYVPP (121 aa)) lie on the Cytoplasmic side of the membrane. The short motif at 774–780 (RKKRKGK) is the Nuclear localization signal element. Thr788 bears the Phosphothreonine mark. A required for interaction with CAV3 region spans residues 817–893 (LQEEKAPLPP…YRSPPPYVPP (77 aa)). The tract at residues 821-893 (KAPLPPPEYP…YRSPPPYVPP (73 aa)) is disordered. A compositionally biased stretch (polar residues) spans 830-844 (PNQSMPETTPLNQDT). A compositionally biased stretch (pro residues) spans 857–868 (NAPPYQPPPPFT). Residues 878-893 (PKNMTPYRSPPPYVPP) form a required for binding DMD and UTRN region. The PPXY motif signature appears at 887–890 (PPPY). The residue at position 890 (Tyr890) is a Phosphotyrosine; by SRC.

Monomer. Heterodimer of alpha- and beta-dystroglycan subunits which are the central components of the dystrophin-glycoprotein complex. This complex then can form a dystrophin-associated glycoprotein complex (DGC) which is composed of three subcomplexes: a cytoplasmic complex comprised of DMD (or UTRN), DTNA and a number of syntrophins, such as SNTB1, SNTB2, SNTG1 and SNTG2, the transmembrane dystroglycan complex, and the sarcoglycan-sarcospan complex. Interacts (via the N-terminal of alphaDAG1) with LARGE1; the interaction enhances laminin binding. Interacts with SGCD. Interacts with AGR2 and AGR3. Interacts (betaDAG1) with DMD; the interaction is inhibited by phosphorylation on the PPXY motif. Interacts (betaDAG1, via its PPXY motif) with UTRN (via its WWW and ZZ domains); the interaction is inhibited by phosphorylation on the PPXY motif. Interacts (betaDAG1, via its phosphorylated PPXY motif) with the SH2 domain-containing proteins, FYN, CSK, NCK and SHC. Interacts (betaDAG1) with CAV3 (via a central WW-like domain); the interaction disrupts the binding of DMD. BetaDAG1 directly interacts with ANK3, but not with ANK2; this interaction does not interfere with DMD-binding and is required for retention at costameres. Identified in a dystroglycan complex that contains at least PRX, DRP2, UTRN, DMD and DAG1. Interacts with POMGNT1. BetaDAG1 interacts with CD93. In terms of processing, O-glycosylated. POMGNT1 catalyzes the initial addition of N-acetylglucosamine, giving rise to the GlcNAc(beta1-2)Man(alpha1-)O-Ser/Thr moiety and thus providing the necessary basis for the addition of further carbohydrate moieties. Heavily O-glycosylated comprising of up to two thirds of its mass and the carbohydrate composition differs depending on tissue type. Mucin-type O-glycosylation is important for ligand binding activity. O-mannosylation is found in high abundance in both brain and muscle where the most abundant glycan is Sia-alpha-2-3-Gal-beta-1-4-Glc-NAc-beta-1-2-Man. In muscle, glycosylation on Thr-315, Thr-317, Thr-379 by a phosphorylated O-mannosyl glycan with the structure 2-(N-acetylamido)-2-deoxygalactosyl-beta-1,3-2-(N-acetylamido)-2-deoxyglucosyl-beta-1,4-6-phosphomannose is mediated by like-acetylglucosaminyltransferase (LARGE1) protein amd is required for laminin binding. O-glycosylated in the N-terminal region with a core 1 or possibly core 8 glycan. The brain form displays a unique glycosylation pattern which is absent in other tissues; this form shows enhanced binding to laminin LAMA5 compared to the skeletal muscle form. Post-translationally, N-glycosylated. Autolytic cleavage produces the alpha and beta subunits. In cutaneous cells, as well as in certain pathological conditions, shedding of beta-dystroglycan can occur releasing a peptide of about 30 kDa. In terms of processing, SRC-mediated phosphorylation of the PPXY motif of the beta subunit recruits SH2 domain-containing proteins, but inhibits binding to WWW domain-containing proteins, DMD and UTRN. This phosphorylation also inhibits nuclear entry. As to expression, detected in brain and kidney (at protein level). Detected in sciatic nerve (at protein level). Expressed in neurons and muscle cells (at protein level). Expressed in a variety of tissues. In brain, expressed in the hippocampal formation, the olfactory bulb, the cerebellum and the thalamus. In the peripheral nerve system, expressed in Schwann cells.

The protein localises to the secreted. It is found in the extracellular space. It localises to the cell membrane. The protein resides in the cytoplasm. Its subcellular location is the cytoskeleton. The protein localises to the nucleus. It is found in the nucleoplasm. It localises to the sarcolemma. The protein resides in the postsynaptic cell membrane. Its function is as follows. The dystroglycan complex is involved in a number of processes including laminin and basement membrane assembly, sarcolemmal stability, cell survival, peripheral nerve myelination, nodal structure, cell migration, and epithelial polarization. Functionally, extracellular peripheral glycoprotein that acts as a receptor for extracellular matrix proteins containing laminin-G domains, and for certain adenoviruses. Receptor for laminin-2 (LAMA2) and agrin in peripheral nerve Schwann cells. Also acts as a receptor for laminin LAMA5. Transmembrane protein that plays important roles in connecting the extracellular matrix to the cytoskeleton. Acts as a cell adhesion receptor in both muscle and non-muscle tissues. Receptor for both DMD and UTRN and, through these interactions, scaffolds axin to the cytoskeleton. Also functions in cell adhesion-mediated signaling and implicated in cell polarity. The chain is Dystroglycan 1 from Mus musculus (Mouse).